We begin with the raw amino-acid sequence, 239 residues long: Ribosomal RNA small subunit methyltransferase G (239 aa).

S-adenosyl-L-methionine is bound by residues Gly-79, Phe-84, Ala-130–Glu-131, and Arg-149. The segment covering Lys-218–Pro-227 has biased composition (basic residues). The interval Lys-218 to Ala-239 is disordered.

It belongs to the methyltransferase superfamily. RNA methyltransferase RsmG family.

Its subcellular location is the cytoplasm. Functionally, specifically methylates the N7 position of a guanine in 16S rRNA. The chain is Ribosomal RNA small subunit methyltransferase G from Leuconostoc citreum (strain KM20).